The following is a 1906-amino-acid chain: Serine protease/ABC transporter B family protein tagB (1906 aa).

Residues 1–31 (MKFQFSSPSKIFLFSSVILILIFIGIKFELL) form the signal peptide. The interval 96–134 (INNNNNNNNKLNNNNNNNNNNNNNNNNNNNNNNNNNNNN) is disordered. One can recognise a Peptidase S8 domain in the interval 356 to 763 (PTVIFGTKDK…ASSTNPSNAI (408 aa)). Active-site charge relay system residues include aspartate 387 and histidine 432. Residues asparagine 594, asparagine 621, and asparagine 672 are each glycosylated (N-linked (GlcNAc...) asparagine). Serine 695 serves as the catalytic Charge relay system. Asparagine 747 and asparagine 823 each carry an N-linked (GlcNAc...) asparagine glycan. 3 consecutive transmembrane segments (helical) span residues 1011 to 1031 (YIII…LMWI), 1076 to 1096 (FIIE…ASIL), and 1121 to 1141 (FIII…GSWI). Residues 1080–1363 (LTIATACSLV…LFGVYVSYIQ (284 aa)) form the ABC transmembrane type-1 domain. Asparagine 1172 is a glycosylation site (N-linked (GlcNAc...) asparagine). The next 3 membrane-spanning stretches (helical) occupy residues 1210–1230 (LVFI…AVPI), 1309–1329 (WLLI…LVIQ), and 1332–1352 (FTVG…DASS). The interval 1385-1455 (LEEEEADRLA…NNNNNIGNLD (71 aa)) is disordered. Residues 1396–1405 (LSGGGGGGGD) show a composition bias toward gly residues. A compositionally biased stretch (basic and acidic residues) spans 1407–1420 (GDDKKDKQNIENGK). The ABC transporter domain maps to 1518–1756 (IEFKNVSFRY…KGKYYRMFSE (239 aa)). N-linked (GlcNAc...) asparagine glycosylation is present at asparagine 1522. 1553-1560 (GPSGSGKS) serves as a coordination point for ATP. Asparagine 1658 is a glycosylation site (N-linked (GlcNAc...) asparagine). The disordered stretch occupies residues 1757 to 1906 (DKDDTPLQNN…QMDEENDEER (150 aa)). Composition is skewed to low complexity over residues 1765–1779 (NNNN…NNNN) and 1814–1871 (EQQE…DYDQ). The segment covering 1872–1886 (VPPPPPLPSESPSPP) has biased composition (pro residues).

In the C-terminal section; belongs to the ABC transporter superfamily. ABCB family. Multidrug resistance exporter (TC 3.A.1.201) subfamily. The protein in the N-terminal section; belongs to the peptidase S8 family.

It is found in the membrane. Its function is as follows. Intercellular communication via tagB may mediate integration of cellular differentiation with morphogenesis. This chain is Serine protease/ABC transporter B family protein tagB (tagB), found in Dictyostelium discoideum (Social amoeba).